A 583-amino-acid chain; its full sequence is Exonuclease 3'-5' domain-containing protein 2 (583 aa).

Topologically, residues 1–11 are mitochondrial intermembrane; it reads MTRESAVATKR. Residues 12-29 form a helical membrane-spanning segment; sequence NWAILAAGVGLVYVLVRH. Over 30–583 the chain is Cytoplasmic; the sequence is RHRLLCPLRR…AGLDAKIKET (554 aa). One can recognise a 3'-5' exonuclease domain in the interval 62–228; the sequence is TTQWVLNELK…AIYQKLCRDL (167 aa). Positions 83, 85, and 213 each coordinate a divalent metal cation. A compositionally biased stretch (polar residues) spans 266–281; sequence GSGVTRSKGSTQSKSN. The tract at residues 266–286 is disordered; that stretch reads GSGVTRSKGSTQSKSNKWVPK.

The protein belongs to the EXD2 family. In terms of assembly, homodimer. It depends on Mg(2+) as a cofactor. Mn(2+) serves as cofactor.

The protein resides in the mitochondrion membrane. In terms of biological role, 3'-5' exoribonuclease required for mitochondrial metabolism. This Drosophila melanogaster (Fruit fly) protein is Exonuclease 3'-5' domain-containing protein 2.